Here is a 128-residue protein sequence, read N- to C-terminus: Protein BEX1 (128 aa).

Positions 1-55 (MESKDQGAKNLNMENDHQKKEEKEEKPQDTIKREPVVAPTFEAGKNCAPRGGRRR) are disordered. The span at 14-35 (ENDHQKKEEKEEKPQDTIKREP) shows a compositional bias: basic and acidic residues. Ser-105 carries the post-translational modification Phosphoserine; by PKB/AKT1. A disordered region spans residues 107–128 (SLRAVSTDPPHHDHHDEFCLMP). Residues 115 to 128 (PPHHDHHDEFCLMP) are compositionally biased toward basic and acidic residues. The interval 117–121 (HHDHH) is his cluster. Cys-125 serves as a coordination point for Zn(2+).

The protein belongs to the BEX family. In terms of assembly, interacts with neurotrophin receptor p75NTR/NGFR. Interacts with OMP. Post-translationally, phosphorylated. Phosphorylation of Ser-105 protects it from the proteasome. Ubiquitinated. Degraded by the proteasome. As to expression, expressed in the central nervous system. Expressed in Schwann cells from newborn sciatic nerve.

It is found in the nucleus. Its subcellular location is the cytoplasm. In terms of biological role, signaling adapter molecule involved in p75NTR/NGFR signaling. Plays a role in cell cycle progression and neuronal differentiation. Inhibits neuronal differentiation in response to nerve growth factor (NGF). May act as a link between the cell cycle and neurotrophic factor signaling, possibly by functioning as an upstream modulator of receptor signaling, coordinating biological responses to external signals with internal cellular states. In absence of reductive stress, acts as a pseudosubstrate for the CRL2(FEM1B) complex: associates with FEM1B via zinc, thereby preventing association between FEM1B and its substrates. The polypeptide is Protein BEX1 (Bex1) (Rattus norvegicus (Rat)).